A 351-amino-acid polypeptide reads, in one-letter code: V-type proton ATPase subunit d1 (351 aa).

Belongs to the V-ATPase V0D/AC39 subunit family. As to quaternary structure, V-ATPase is a heteromultimeric enzyme composed of a peripheral catalytic V1 complex (components A to H) attached to an integral membrane V0 proton pore complex (components: a, c, c'', d and e).

It is found in the vacuole membrane. In terms of biological role, subunit of the integral membrane V0 complex of vacuolar ATPase. Vacuolar ATPase is responsible for acidifying a variety of intracellular compartments in eukaryotic cells, thus providing most of the energy required for transport processes in the vacuolar system. This is V-type proton ATPase subunit d1 (VHA-d1) from Arabidopsis thaliana (Mouse-ear cress).